The sequence spans 128 residues: Small ribosomal subunit protein uS12 (128 aa).

The disordered stretch occupies residues 1–30; it reads MPTINQLIRKGREPKERKSKSPALMGNPQK. Residue aspartate 89 is modified to 3-methylthioaspartic acid. Positions 106–128 are disordered; it reads GVEGRKQGRSKYGTKRPKEGGKK.

Belongs to the universal ribosomal protein uS12 family. As to quaternary structure, part of the 30S ribosomal subunit. Contacts proteins S8 and S17. May interact with IF1 in the 30S initiation complex.

With S4 and S5 plays an important role in translational accuracy. Its function is as follows. Interacts with and stabilizes bases of the 16S rRNA that are involved in tRNA selection in the A site and with the mRNA backbone. Located at the interface of the 30S and 50S subunits, it traverses the body of the 30S subunit contacting proteins on the other side and probably holding the rRNA structure together. The combined cluster of proteins S8, S12 and S17 appears to hold together the shoulder and platform of the 30S subunit. This is Small ribosomal subunit protein uS12 from Dictyoglomus thermophilum (strain ATCC 35947 / DSM 3960 / H-6-12).